A 310-amino-acid polypeptide reads, in one-letter code: Spermatid maturation protein 1 (310 aa).

Residues I29–L49 form a helical membrane-spanning segment. The segment at A215–P238 is disordered. Positions V262–Y286 form a coiled coil.

As to expression, testis-specific. Exclusively present in cytoplasm of steps 14-16 elongated spermatids (at protein level).

The protein localises to the membrane. The protein resides in the cytoplasm. Functionally, required for proper cytoplasm removal during spermatogenesis. The sequence is that of Spermatid maturation protein 1 (Spem1) from Mus musculus (Mouse).